The sequence spans 228 residues: Indole-3-glycerol phosphate synthase (228 aa).

It belongs to the TrpC family.

The enzyme catalyses 1-(2-carboxyphenylamino)-1-deoxy-D-ribulose 5-phosphate + H(+) = (1S,2R)-1-C-(indol-3-yl)glycerol 3-phosphate + CO2 + H2O. It participates in amino-acid biosynthesis; L-tryptophan biosynthesis; L-tryptophan from chorismate: step 4/5. The chain is Indole-3-glycerol phosphate synthase from Pyrococcus furiosus (strain ATCC 43587 / DSM 3638 / JCM 8422 / Vc1).